The following is a 486-amino-acid chain: MAEFETIIGLEVHAQLNTESKIFSTSATKFGSPPNSQTNPVCLGLPGALPVLNESALEKAIMAGIAFGCDISLFTKFDRKNYFYPDLPKGYQISQFDKPICTGGGVTFTIKGEESSRYVRLTRIHMEEDAGKLIHSADPNIPQSYVDLNRAGTPLIEIVSEPDMRSSDEAYYYLNSLKSILKYIRVSDCNMEEGSLRCDANVSIRPKGSDKFGTRVEIKNLNSFKAVKAAIDYEVKWQTEMALEGKTFQQQTKLWDSVANKTVTMRTKEMSHDYRYFPDPDLPVIILQKETVESVRSKLPELPNERKNRFVEKLGLPKYDAEVLTAEREIADYFEDALKISGDAKKTSNWVKDEVLGVVNKESITISEFSVSAQRIGGLVKLIADGKISGKIAKTVFEELLISDKDAETIVTEKNLIVVRDDKEIERIVNEAIANNQDAVAKYKSGKDRALGAIVGYVMKVSKGKADPELVNQMLLDKLGSLPPKE.

It belongs to the GatB/GatE family. GatB subfamily. As to quaternary structure, heterotrimer of A, B and C subunits.

It catalyses the reaction L-glutamyl-tRNA(Gln) + L-glutamine + ATP + H2O = L-glutaminyl-tRNA(Gln) + L-glutamate + ADP + phosphate + H(+). The catalysed reaction is L-aspartyl-tRNA(Asn) + L-glutamine + ATP + H2O = L-asparaginyl-tRNA(Asn) + L-glutamate + ADP + phosphate + 2 H(+). In terms of biological role, allows the formation of correctly charged Asn-tRNA(Asn) or Gln-tRNA(Gln) through the transamidation of misacylated Asp-tRNA(Asn) or Glu-tRNA(Gln) in organisms which lack either or both of asparaginyl-tRNA or glutaminyl-tRNA synthetases. The reaction takes place in the presence of glutamine and ATP through an activated phospho-Asp-tRNA(Asn) or phospho-Glu-tRNA(Gln). In Leptospira borgpetersenii serovar Hardjo-bovis (strain JB197), this protein is Aspartyl/glutamyl-tRNA(Asn/Gln) amidotransferase subunit B.